A 74-amino-acid chain; its full sequence is Protein krueppel (74 aa).

C2H2-type zinc fingers lie at residues 1 to 4 (ERTH), 10 to 32 (FECPECHKRFTRDHHLKTHMRLH), 38 to 60 (YHCSHCDRQFVQVANLRRHLRVH), and 66 to 74 (YACELCAAK).

The protein belongs to the krueppel C2H2-type zinc-finger protein family.

The protein resides in the nucleus. Its function is as follows. Krueppel is a gap class segmentation protein. The polypeptide is Protein krueppel (Kr) (Apis mellifera (Honeybee)).